The following is a 166-amino-acid chain: Cyclic pyranopterin monophosphate synthase (166 aa).

Substrate-binding positions include 83 to 85 and 121 to 122; these read LCH and ME. Residue aspartate 136 is part of the active site.

Belongs to the MoaC family. Homohexamer; trimer of dimers.

The enzyme catalyses (8S)-3',8-cyclo-7,8-dihydroguanosine 5'-triphosphate = cyclic pyranopterin phosphate + diphosphate. Its pathway is cofactor biosynthesis; molybdopterin biosynthesis. Its function is as follows. Catalyzes the conversion of (8S)-3',8-cyclo-7,8-dihydroguanosine 5'-triphosphate to cyclic pyranopterin monophosphate (cPMP). This chain is Cyclic pyranopterin monophosphate synthase, found in Trichodesmium erythraeum (strain IMS101).